The chain runs to 929 residues: ATP-dependent DNA helicase PIF1 (929 aa).

The transit peptide at 1–52 (MLRRLLQPAYNVALSGTSASTLPRKSASVGLVRTALMPVDYNAGALFCAMRF) directs the protein to the mitochondrion. Residues 55–89 (GTEKERKREPKRGSKRRSKATTTLSTPTDAQTSVT) are disordered. Residues 56 to 66 (TEKERKREPKR) are compositionally biased toward basic and acidic residues. A compositionally biased stretch (polar residues) spans 74–89 (ATTTLSTPTDAQTSVT). 302–309 (GSAGTGKT) is an ATP binding site. Residues 776–796 (HLLYVAMSRVRNPEQLSMSSF) mediate DNA binding. The segment at 902–929 (HERRQKKMAVEGAKQTDTTKASSGESLE) is disordered. Positions 916-929 (QTDTTKASSGESLE) are enriched in polar residues.

This sequence belongs to the helicase family. PIF1 subfamily. As to quaternary structure, monomer. Mg(2+) serves as cofactor.

Its subcellular location is the mitochondrion. The catalysed reaction is Couples ATP hydrolysis with the unwinding of duplex DNA at the replication fork by translocating in the 5'-3' direction. This creates two antiparallel DNA single strands (ssDNA). The leading ssDNA polymer is the template for DNA polymerase III holoenzyme which synthesizes a continuous strand.. The enzyme catalyses ATP + H2O = ADP + phosphate + H(+). In terms of biological role, DNA-dependent ATPase and probable 5'-3' DNA helicase required for the maintenance of mitochondrial (kinetoplast) genome stability. Essential for replication of kinetoplast minicircles. Involved in the segregation of minicircle progeny. The sequence is that of ATP-dependent DNA helicase PIF1 from Trypanosoma brucei brucei (strain 927/4 GUTat10.1).